The primary structure comprises 324 residues: O-ureido-L-serine synthase (324 aa).

An N6-(pyridoxal phosphate)lysine modification is found at K43. Residues N73, 177–181 (GTTGT), and S265 each bind pyridoxal 5'-phosphate.

Belongs to the cysteine synthase/cystathionine beta-synthase family. In terms of assembly, homotetramer. It depends on pyridoxal 5'-phosphate as a cofactor.

The catalysed reaction is hydroxyurea + O-acetyl-L-serine = O-ureido-L-serine + acetate + H(+). The enzyme catalyses O-acetyl-L-serine + hydrogen sulfide = L-cysteine + acetate. Its function is as follows. Involved in the biosynthesis of the antibiotic D-cycloserine (DCS), a cyclic structural analog of D-alanine, used as an antitubercular agent. Catalyzes the addition of hydroxyurea on O-acetyl-L-serine (OAS) to yield O-ureido-L-serine. It prefers sulfide as the second substrate, followed by hydroxyurea, L-homocysteine, and thiosulfate. This Streptomyces lavendulae protein is O-ureido-L-serine synthase.